Consider the following 315-residue polypeptide: Solute carrier family 25 member 32 (315 aa).

Solcar repeat units lie at residues 20–109, 118–209, and 222–306; these read HVRY…IKSY, LEAT…LKLK, and LSTV…VSHF. The next 6 helical transmembrane spans lie at 26–43, 89–106, 123–143, 186–203, 227–243, and 281–300; these read LIAGVSGGVLSNLALHPL, IWGAGLSWGLYFFFYNAI, YLVSAAEAGAMTLCITNPLWV, FVPGLFGTSHGALQFMAY, YISVAALSKIFAVAATY, and GIAPNLIRVTPACCITFVVY.

Belongs to the mitochondrial carrier (TC 2.A.29) family. Ubiquitous.

The protein resides in the mitochondrion inner membrane. It catalyses the reaction FAD(in) = FAD(out). Its function is as follows. Facilitates flavin adenine dinucleotide (FAD) translocation across the mitochondrial inner membrane into the mitochondrial matrix where it acts as a redox cofactor to assist flavoenzyme activities in fundamental metabolic processes including fatty acid beta-oxidation, amino acid and choline metabolism as well as mitochondrial electron transportation. In particular, provides FAD to DLD dehydrogenase of the glycine cleavage system, part of mitochondrial one-carbon metabolic pathway involved in neural tube closure in early embryogenesis. This Homo sapiens (Human) protein is Solute carrier family 25 member 32.